A 152-amino-acid polypeptide reads, in one-letter code: Calmodulin-like protein 2 (152 aa).

EF-hand domains are found at residues 1–36 (MDRG…VGIM), 37–72 (VPEN…MVEE), 74–109 (EEEE…MGLK), and 112–147 (RTLE…GGFA). Residues Asp14, Asn16, Asp18, Lys20, Glu25, Asp50, Asn52, Asp54, Glu61, Asp87, Asn89, Asp91, Glu98, Asp125, Asp127, Asp129, Met131, and Glu136 each contribute to the Ca(2+) site.

This sequence belongs to the calmodulin family.

In terms of biological role, potential calcium sensor that is required for pollen tube attraction for ovule fertilization. The chain is Calmodulin-like protein 2 (CML2) from Arabidopsis thaliana (Mouse-ear cress).